A 388-amino-acid chain; its full sequence is Succinyl-diaminopimelate desuccinylase (388 aa).

A Zn(2+)-binding site is contributed by His84. Asp86 is an active-site residue. Asp115 provides a ligand contact to Zn(2+). Catalysis depends on Glu146, which acts as the Proton acceptor. The Zn(2+) site is built by Glu147, Glu175, and His360.

The protein belongs to the peptidase M20A family. DapE subfamily. In terms of assembly, homodimer. Requires Zn(2+) as cofactor. The cofactor is Co(2+).

It catalyses the reaction N-succinyl-(2S,6S)-2,6-diaminopimelate + H2O = (2S,6S)-2,6-diaminopimelate + succinate. It participates in amino-acid biosynthesis; L-lysine biosynthesis via DAP pathway; LL-2,6-diaminopimelate from (S)-tetrahydrodipicolinate (succinylase route): step 3/3. Its function is as follows. Catalyzes the hydrolysis of N-succinyl-L,L-diaminopimelic acid (SDAP), forming succinate and LL-2,6-diaminopimelate (DAP), an intermediate involved in the bacterial biosynthesis of lysine and meso-diaminopimelic acid, an essential component of bacterial cell walls. This Helicobacter pylori (strain G27) protein is Succinyl-diaminopimelate desuccinylase.